We begin with the raw amino-acid sequence, 249 residues long: ATP synthase subunit a (249 aa).

Helical transmembrane passes span 26–46, 84–104, 114–134, 143–163, 185–205, and 208–228; these read FTNVSAFMVATVVLASGFLYL, FFPFVFSLFMFVLVANFIGLF, IIVTFALSLLVIGTVIFYGFF, LFVPSGVPGIIVPLVVLIEII, ITLKVFAGFVVSLSSLGALGI, and TVLPLLMTVAITALEFLVAFL.

The protein belongs to the ATPase A chain family. In terms of assembly, F-type ATPases have 2 components, CF(1) - the catalytic core - and CF(0) - the membrane proton channel. CF(1) has five subunits: alpha(3), beta(3), gamma(1), delta(1), epsilon(1). CF(0) has three main subunits: a(1), b(2) and c(9-12). The alpha and beta chains form an alternating ring which encloses part of the gamma chain. CF(1) is attached to CF(0) by a central stalk formed by the gamma and epsilon chains, while a peripheral stalk is formed by the delta and b chains.

It is found in the cell inner membrane. Functionally, key component of the proton channel; it plays a direct role in the translocation of protons across the membrane. The chain is ATP synthase subunit a from Brucella ovis (strain ATCC 25840 / 63/290 / NCTC 10512).